The chain runs to 191 residues: dCTP deaminase, dUMP-forming (191 aa).

DCTP is bound by residues 101 to 106, Asp119, 127 to 129, Gln148, Tyr162, and Gln174; these read KSSLGR and TLE. Catalysis depends on Glu129, which acts as the Proton donor/acceptor. Residues 163–191 form a disordered region; that stretch reads GSAKYGSRYQGQRGPTPSRSYQNFHRTPI. Over residues 171-191 the composition is skewed to polar residues; the sequence is YQGQRGPTPSRSYQNFHRTPI.

This sequence belongs to the dCTP deaminase family. Homotrimer.

The enzyme catalyses dCTP + 2 H2O = dUMP + NH4(+) + diphosphate. Its pathway is pyrimidine metabolism; dUMP biosynthesis; dUMP from dCTP: step 1/1. Bifunctional enzyme that catalyzes both the deamination of dCTP to dUTP and the hydrolysis of dUTP to dUMP without releasing the toxic dUTP intermediate. This Nocardioides sp. (strain ATCC BAA-499 / JS614) protein is dCTP deaminase, dUMP-forming.